The chain runs to 492 residues: Glutamyl-tRNA(Gln) amidotransferase subunit A (492 aa).

Catalysis depends on charge relay system residues Lys79 and Ser154. The Acyl-ester intermediate role is filled by Ser178.

This sequence belongs to the amidase family. GatA subfamily. Heterotrimer of A, B and C subunits.

The enzyme catalyses L-glutamyl-tRNA(Gln) + L-glutamine + ATP + H2O = L-glutaminyl-tRNA(Gln) + L-glutamate + ADP + phosphate + H(+). Its function is as follows. Allows the formation of correctly charged Gln-tRNA(Gln) through the transamidation of misacylated Glu-tRNA(Gln) in organisms which lack glutaminyl-tRNA synthetase. The reaction takes place in the presence of glutamine and ATP through an activated gamma-phospho-Glu-tRNA(Gln). In Acinetobacter baumannii (strain ACICU), this protein is Glutamyl-tRNA(Gln) amidotransferase subunit A.